Reading from the N-terminus, the 90-residue chain is Small ribosomal subunit protein uS17 (90 aa).

The protein belongs to the universal ribosomal protein uS17 family. Part of the 30S ribosomal subunit.

In terms of biological role, one of the primary rRNA binding proteins, it binds specifically to the 5'-end of 16S ribosomal RNA. The sequence is that of Small ribosomal subunit protein uS17 from Burkholderia multivorans (strain ATCC 17616 / 249).